A 406-amino-acid chain; its full sequence is 2,3-bisphosphoglycerate-independent phosphoglycerate mutase (406 aa).

The segment at 156 to 183 (NLSDKISDSDPHSEGKPPEPIRPLDPSA) is disordered. Over residues 160 to 174 (KISDSDPHSEGKPPE) the composition is skewed to basic and acidic residues.

The protein belongs to the BPG-independent phosphoglycerate mutase family. A-PGAM subfamily.

It carries out the reaction (2R)-2-phosphoglycerate = (2R)-3-phosphoglycerate. It participates in carbohydrate degradation; glycolysis; pyruvate from D-glyceraldehyde 3-phosphate: step 3/5. Its function is as follows. Catalyzes the interconversion of 2-phosphoglycerate and 3-phosphoglycerate. This chain is 2,3-bisphosphoglycerate-independent phosphoglycerate mutase, found in Thermoplasma volcanium (strain ATCC 51530 / DSM 4299 / JCM 9571 / NBRC 15438 / GSS1).